A 105-amino-acid polypeptide reads, in one-letter code: Large ribosomal subunit protein uL24 (105 aa).

This sequence belongs to the universal ribosomal protein uL24 family. Part of the 50S ribosomal subunit.

In terms of biological role, one of two assembly initiator proteins, it binds directly to the 5'-end of the 23S rRNA, where it nucleates assembly of the 50S subunit. Its function is as follows. One of the proteins that surrounds the polypeptide exit tunnel on the outside of the subunit. In Mycobacterium tuberculosis (strain CDC 1551 / Oshkosh), this protein is Large ribosomal subunit protein uL24.